Here is a 227-residue protein sequence, read N- to C-terminus: MNLSFFDQFSSPYLMGMPLILPSLLLPTLLFPTPGRRWISNRLSTLQLWVINLITKQLMTPLNKTGHKWALLLTSLILLLLSINLMGLLPYTFTPTTQLSMNMALAFPLWLATLLIGLRNQPSASLAHLLPEGTPTPLIPILIMIETTSLLIRPLALGVRLTANLTAGHLLIQLISTATIALLPTMPSISTLTALILLLLTILEVAVAMIQAYVFVLLLSLYLQENI.

6 helical membrane passes run 12–32 (PYLM…LLFP), 69–89 (WALL…MGLL), 98–118 (QLSM…LIGL), 139–159 (IPIL…ALGV), 170–190 (LLIQ…PSIS), and 196–216 (ILLL…YVFV).

It belongs to the ATPase A chain family. As to quaternary structure, component of the ATP synthase complex composed at least of ATP5F1A/subunit alpha, ATP5F1B/subunit beta, ATP5MC1/subunit c (homooctomer), MT-ATP6/subunit a, MT-ATP8/subunit 8, ATP5ME/subunit e, ATP5MF/subunit f, ATP5MG/subunit g, ATP5MK/subunit k, ATP5MJ/subunit j, ATP5F1C/subunit gamma, ATP5F1D/subunit delta, ATP5F1E/subunit epsilon, ATP5PF/subunit F6, ATP5PB/subunit b, ATP5PD/subunit d, ATP5PO/subunit OSCP. ATP synthase complex consists of a soluble F(1) head domain (subunits alpha(3) and beta(3)) - the catalytic core - and a membrane F(0) domain - the membrane proton channel (subunits c, a, 8, e, f, g, k and j). These two domains are linked by a central stalk (subunits gamma, delta, and epsilon) rotating inside the F1 region and a stationary peripheral stalk (subunits F6, b, d, and OSCP). Interacts with DNAJC30; interaction is direct.

The protein localises to the mitochondrion inner membrane. It carries out the reaction H(+)(in) = H(+)(out). Functionally, subunit a, of the mitochondrial membrane ATP synthase complex (F(1)F(0) ATP synthase or Complex V) that produces ATP from ADP in the presence of a proton gradient across the membrane which is generated by electron transport complexes of the respiratory chain. ATP synthase complex consist of a soluble F(1) head domain - the catalytic core - and a membrane F(1) domain - the membrane proton channel. These two domains are linked by a central stalk rotating inside the F(1) region and a stationary peripheral stalk. During catalysis, ATP synthesis in the catalytic domain of F(1) is coupled via a rotary mechanism of the central stalk subunits to proton translocation. With the subunit c (ATP5MC1), forms the proton-conducting channel in the F(0) domain, that contains two crucial half-channels (inlet and outlet) that facilitate proton movement from the mitochondrial intermembrane space (IMS) into the matrix. Protons are taken up via the inlet half-channel and released through the outlet half-channel, following a Grotthuss mechanism. The sequence is that of ATP synthase F(0) complex subunit a from Coturnix japonica (Japanese quail).